Here is a 116-residue protein sequence, read N- to C-terminus: Large ribosomal subunit protein uL24 (116 aa).

The protein belongs to the universal ribosomal protein uL24 family. As to quaternary structure, part of the 50S ribosomal subunit.

One of two assembly initiator proteins, it binds directly to the 5'-end of the 23S rRNA, where it nucleates assembly of the 50S subunit. In terms of biological role, one of the proteins that surrounds the polypeptide exit tunnel on the outside of the subunit. The protein is Large ribosomal subunit protein uL24 of Protochlamydia amoebophila (strain UWE25).